We begin with the raw amino-acid sequence, 852 residues long: Genome polyprotein (852 aa).

Short sequence motifs ((L)YPX(n)L motif) lie at residues 167-171 and 200-205; these read YPHGL and YPVWEL. The involved in P1-2A pentamerization stretch occupies residues 766 to 836; sequence MMSRIAAGDL…PRKMKGLFSQ (71 aa).

This sequence belongs to the picornaviridae polyprotein family. In terms of assembly, homodimer. Homomultimer; probably interacts with membranes in a multimeric form. Seems to assemble into amyloid-like fibers. As to quaternary structure, homopentamer. Homooligomer. Interacts with capsid protein VP2. Interacts with capsid protein VP3. In terms of assembly, interacts with capsid protein VP1. Interacts with capsid protein VP3. As to quaternary structure, interacts with capsid protein VP1. Interacts with capsid protein VP2. Specific enzymatic cleavages by viral protease in vivo yield a variety of precursors and mature proteins. Polyprotein processing intermediates are produced, such as P1-2A which is a functional precursor of the structural proteins, VP0 which is a VP4-VP2 precursor, VP1-2A precursor, 3ABC precursor which is a stable and catalytically active precursor of 3A, 3B and 3C proteins, 3AB and 3CD precursors. The assembly signal 2A is removed from VP1-2A by a host protease, possibly host Cathepsin L. This cleavage occurs over a region of 3 amino-acids probably generating VP1 proteins with heterogeneous C-termini. Post-translationally, during virion maturation, immature virions are rendered infectious following cleavage of VP0 into VP4 and VP2. This maturation seems to be an autocatalytic event triggered by the presence of RNA in the capsid and is followed by a conformational change of the particle. In terms of processing, the assembly signal 2A is removed from VP1-2A by a host protease, possibly host Cathepsin L in naked virions. This cleavage does not occur in enveloped virions. This cleavage occurs over a region of 3 amino-acids probably generating VP1 proteins with heterogeneous C-termini. Viral protein genome-linked: VPg is uridylylated prior to priming replication into VPg-pUpU. Post-translationally, unlike other picornaviruses, does not seem to be myristoylated.

It is found in the virion. The protein localises to the host endosome. It localises to the host multivesicular body. The protein resides in the host membrane. Its function is as follows. Capsid proteins VP1, VP2, and VP3 form a closed capsid enclosing the viral positive strand RNA genome. All these proteins contain a beta-sheet structure called beta-barrel jelly roll. Together they form an icosahedral capsid (T=3) composed of 60 copies of each VP1, VP2, and VP3, with a diameter of approximately 300 Angstroms. VP1 is situated at the 12 fivefold axes, whereas VP2 and VP3 are located at the quasi-sixfold axes. The naked capsid interacts with the host receptor HAVCR1 to provide virion attachment to and probably entry into the target cell. In terms of biological role, VP0 precursor is a component of the immature procapsids. Plays a role in the assembly of the 12 pentamers into an icosahedral structure. Has not been detected in mature virions, supposedly owing to its small size. Functionally, precursor component of immature procapsids that corresponds to an extended form of the structural protein VP1. After maturation, possibly by the host Cathepsin L, the assembly signal 2A is cleaved to give rise to the mature VP1 protein. Its function is as follows. Affects membrane integrity and causes an increase in membrane permeability. In terms of biological role, functions as a viroporin. Affects membrane integrity and causes an increase in membrane permeability. Involved in host intracellular membrane rearrangements probably to give rise to the viral factories. Does not disrupt calcium homeostasis or glycoprotein trafficking. Antagonizes the innate immune response of the host by suppressing IFN-beta synthesis, which it achieves by interfering with the RIG-I/IFIH1 pathway. This chain is Genome polyprotein, found in Cercopithecus hamlyni (Owl-faced monkey).